The chain runs to 473 residues: GDP-fucose protein O-fucosyltransferase 2 (473 aa).

Positions 1–25 are cleaved as a signal peptide; the sequence is MKNMIYNLISISLYSLIIILTDIYA. Residues 59 to 63, 283 to 285, and 379 to 380 each bind GDP-beta-L-fucose; these read GEGFN, HLR, and RF. Glutamate 60 functions as the Proton acceptor in the catalytic mechanism.

This sequence belongs to the glycosyltransferase 68 family.

Its subcellular location is the endoplasmic reticulum. It catalyses the reaction L-seryl-[protein] + GDP-beta-L-fucose = 3-O-(alpha-L-fucosyl)-L-seryl-[protein] + GDP + H(+). It carries out the reaction L-threonyl-[protein] + GDP-beta-L-fucose = 3-O-(alpha-L-fucosyl)-L-threonyl-[protein] + GDP + H(+). It functions in the pathway protein modification; protein glycosylation. In terms of biological role, catalyzes the reaction that attaches fucose through an O-glycosidic linkage to a conserved serine or threonine residue in the consensus sequence C1-X-X-S/T-C2 of thrombospondin type I repeats (TSRs) where C1 and C2 are the first and second cysteines of the repeat, respectively. O-fucosylates sporozoite proteins CSP and TRAP. O-fucosylation regulates stability and intracellular trafficking of TRAP but not of CSP. Dispensable for parasite transmission to the mosquito vector and/or infection of the vertebrate host hepatocytes. The polypeptide is GDP-fucose protein O-fucosyltransferase 2 (Plasmodium berghei (strain Anka)).